Reading from the N-terminus, the 486-residue chain is Arginine/agmatine antiporter (486 aa).

Helical transmembrane passes span 12–32, 41–61, 85–105, 129–149, 161–181, 211–231, 242–262, 296–316, 341–361, 367–387, 418–438, and 461–481; these read LGAI…GIFS, AGAG…FFIA, GFGP…QIFG, NTIP…FIVL, IGTI…AFFF, STML…VMSA, ATIL…LLPF, IGLL…VAEI, VSLY…YFST, MLSI…AFLV, IWLI…LLAL, and EVTK…LFST.

It belongs to the amino acid-polyamine-organocation (APC) superfamily. Basic amino acid/polyamine antiporter (APA) (TC 2.A.3.2) family.

It is found in the cell inner membrane. Catalyzes the exchange of L-arginine for agmatine. The arginine uptake by the bacterium in the macrophage may be a virulence factor against the host innate immune response. The polypeptide is Arginine/agmatine antiporter (aaxC) (Chlamydia felis (strain Fe/C-56) (Chlamydophila felis)).